A 52-amino-acid polypeptide reads, in one-letter code: MHESHLVVILALLLLALWCLSTRPVQPSCHVEINGHSIIVTGNCWHSTQRPH.

Over 1 to 3 (MHE) the chain is Lumenal. The helical transmembrane segment at 4-21 (SHLVVILALLLLALWCLS) threads the bilayer. Residues 22 to 52 (TRPVQPSCHVEINGHSIIVTGNCWHSTQRPH) are Cytoplasmic-facing.

Belongs to the Tymovirales TGBp3 protein family.

The protein localises to the host endoplasmic reticulum membrane. In terms of biological role, plays a role in viral cell-to-cell propagation, by facilitating genome transport to neighboring plant cells through plasmosdesmata. May induce the formation of granular vesicles derived from the Endoplasmic reticulum, which align on actin filaments. The polypeptide is Movement protein TGBp3 (Foxtail mosaic virus).